Here is a 177-residue protein sequence, read N- to C-terminus: Small ribosomal subunit protein eS10z (177 aa).

A disordered region spans residues 90–177 (TLKKSAKPGG…AAAPSGSGFP (88 aa)). Residues 108–140 (DRQRGPPRSDGDRPRFGDRDGYRGGPRGGDEKG) show a composition bias toward basic and acidic residues. The segment covering 141–150 (GAPADFQPSF) has biased composition (low complexity). Over residues 151 to 165 (QGGGGRPGFGRGAGG) the composition is skewed to gly residues. Low complexity predominate over residues 166-177 (YSAAAPSGSGFP).

This sequence belongs to the eukaryotic ribosomal protein eS10 family.

It is found in the cytoplasm. In Arabidopsis thaliana (Mouse-ear cress), this protein is Small ribosomal subunit protein eS10z (RPS10A).